The following is a 307-amino-acid chain: Oxygen-dependent coproporphyrinogen-III oxidase (307 aa).

Position 99 (serine 99) interacts with substrate. A divalent metal cation contacts are provided by histidine 103 and histidine 113. The active-site Proton donor is histidine 113. 115 to 117 (NVR) lines the substrate pocket. Residues histidine 152 and histidine 182 each contribute to the a divalent metal cation site. The important for dimerization stretch occupies residues 247 to 282 (YVEFNLVFDRGTLFGLQSGGRTESILMSMPPVVNWR). 265-267 (GGR) is a binding site for substrate.

Belongs to the aerobic coproporphyrinogen-III oxidase family. Homodimer. A divalent metal cation serves as cofactor.

It localises to the cytoplasm. It catalyses the reaction coproporphyrinogen III + O2 + 2 H(+) = protoporphyrinogen IX + 2 CO2 + 2 H2O. It functions in the pathway porphyrin-containing compound metabolism; protoporphyrin-IX biosynthesis; protoporphyrinogen-IX from coproporphyrinogen-III (O2 route): step 1/1. Involved in the heme biosynthesis. Catalyzes the aerobic oxidative decarboxylation of propionate groups of rings A and B of coproporphyrinogen-III to yield the vinyl groups in protoporphyrinogen-IX. The sequence is that of Oxygen-dependent coproporphyrinogen-III oxidase from Paraburkholderia xenovorans (strain LB400).